A 368-amino-acid chain; its full sequence is Glutamate 5-kinase (368 aa).

K9 is an ATP binding site. Positions 49, 136, and 148 each coordinate substrate. Residues 168–169 (TD) and 210–216 (TGGMMTK) each bind ATP. Residues 275 to 353 (AGIITIDDGA…ADIENVLGYE (79 aa)) enclose the PUA domain.

The protein belongs to the glutamate 5-kinase family.

The protein localises to the cytoplasm. It carries out the reaction L-glutamate + ATP = L-glutamyl 5-phosphate + ADP. It functions in the pathway amino-acid biosynthesis; L-proline biosynthesis; L-glutamate 5-semialdehyde from L-glutamate: step 1/2. In terms of biological role, catalyzes the transfer of a phosphate group to glutamate to form L-glutamate 5-phosphate. In Haemophilus influenzae (strain 86-028NP), this protein is Glutamate 5-kinase.